Consider the following 428-residue polypeptide: C4-dicarboxylate transport protein (428 aa).

Helical transmembrane passes span 8-28, 44-64, 76-96, 142-162, 184-204, 222-242, 326-346, and 352-372; these read SLYFQVLTAIAIGILLGHFYP, LIKMIIAPVIFCTVVTGIAGM, VALLYFEIVSTIALIIGLIIV, IGAFASGNILQVLLFAVLFGF, VIFGIINMIMRLAPIGAFGAM, LIICFYITCILFVVLVLGSIA, IVHQITLLIVLLLSSKGAAGV, and IVLAATLSAVGHLPVAGLALI.

It belongs to the dicarboxylate/amino acid:cation symporter (DAACS) (TC 2.A.23) family.

It is found in the cell inner membrane. Functionally, responsible for the transport of dicarboxylates such as succinate, fumarate, and malate from the periplasm across the membrane. In Escherichia coli O127:H6 (strain E2348/69 / EPEC), this protein is C4-dicarboxylate transport protein.